The chain runs to 213 residues: Probable GTP-binding protein EngB (213 aa).

One can recognise an EngB-type G domain in the interval 30 to 204 (EGFEVAFAGR…YTALAGWMEL (175 aa)). Residues 38 to 45 (GRSNAGKS), 64 to 68 (GRTQL), 82 to 85 (DLPG), 149 to 152 (TKAD), and 182 to 185 (LFSA) each bind GTP. Residues serine 45 and threonine 66 each contribute to the Mg(2+) site.

Belongs to the TRAFAC class TrmE-Era-EngA-EngB-Septin-like GTPase superfamily. EngB GTPase family. It depends on Mg(2+) as a cofactor.

Functionally, necessary for normal cell division and for the maintenance of normal septation. This Pseudomonas fluorescens (strain SBW25) protein is Probable GTP-binding protein EngB.